The following is an 89-amino-acid chain: Protein FAM25A (89 aa).

The protein belongs to the FAM25 family.

The chain is Protein FAM25A from Homo sapiens (Human).